Here is a 473-residue protein sequence, read N- to C-terminus: Protein translocase subunit SecA (473 aa).

Asp-127 serves as a coordination point for ATP. Positions 424-447 (VAEGKAVHQDTSKQEPKKKQPIRK) are disordered. The Zn(2+) site is built by Cys-457, Cys-459, Cys-468, and Cys-469.

The protein belongs to the SecA family. As to quaternary structure, monomer and homodimer. Part of the essential Sec protein translocation apparatus which comprises SecA, SecYEG and auxiliary proteins SecDF. Other proteins may also be involved. It depends on Zn(2+) as a cofactor.

Its subcellular location is the cell membrane. It is found in the cytoplasm. The catalysed reaction is ATP + H2O + cellular proteinSide 1 = ADP + phosphate + cellular proteinSide 2.. Its function is as follows. Part of the Sec protein translocase complex. Interacts with the SecYEG preprotein conducting channel. Has a central role in coupling the hydrolysis of ATP to the transfer of proteins into and across the cell membrane, serving as an ATP-driven molecular motor driving the stepwise translocation of polypeptide chains across the membrane. The protein is Protein translocase subunit SecA of Cytobacillus firmus (Bacillus firmus).